We begin with the raw amino-acid sequence, 332 residues long: Ferredoxin--NADP reductase (332 aa).

Residues D33, Q41, Y46, A86, M121, D282, and S325 each contribute to the FAD site.

It belongs to the ferredoxin--NADP reductase type 2 family. In terms of assembly, homodimer. It depends on FAD as a cofactor.

The enzyme catalyses 2 reduced [2Fe-2S]-[ferredoxin] + NADP(+) + H(+) = 2 oxidized [2Fe-2S]-[ferredoxin] + NADPH. This chain is Ferredoxin--NADP reductase, found in Sulfurisphaera tokodaii (strain DSM 16993 / JCM 10545 / NBRC 100140 / 7) (Sulfolobus tokodaii).